The primary structure comprises 148 residues: SsrA-binding protein (148 aa).

A compositionally biased stretch (basic and acidic residues) spans 129–142; the sequence is ETEKKRDWEREKAR. The tract at residues 129-148 is disordered; it reads ETEKKRDWEREKARIMRAGT.

Belongs to the SmpB family.

Its subcellular location is the cytoplasm. Functionally, required for rescue of stalled ribosomes mediated by trans-translation. Binds to transfer-messenger RNA (tmRNA), required for stable association of tmRNA with ribosomes. tmRNA and SmpB together mimic tRNA shape, replacing the anticodon stem-loop with SmpB. tmRNA is encoded by the ssrA gene; the 2 termini fold to resemble tRNA(Ala) and it encodes a 'tag peptide', a short internal open reading frame. During trans-translation Ala-aminoacylated tmRNA acts like a tRNA, entering the A-site of stalled ribosomes, displacing the stalled mRNA. The ribosome then switches to translate the ORF on the tmRNA; the nascent peptide is terminated with the 'tag peptide' encoded by the tmRNA and targeted for degradation. The ribosome is freed to recommence translation, which seems to be the essential function of trans-translation. In Burkholderia orbicola (strain AU 1054), this protein is SsrA-binding protein.